The following is a 141-amino-acid chain: Large ribosomal subunit protein uL11 (141 aa).

Belongs to the universal ribosomal protein uL11 family. Part of the ribosomal stalk of the 50S ribosomal subunit. Interacts with L10 and the large rRNA to form the base of the stalk. L10 forms an elongated spine to which L12 dimers bind in a sequential fashion forming a multimeric L10(L12)X complex. In terms of processing, one or more lysine residues are methylated.

Forms part of the ribosomal stalk which helps the ribosome interact with GTP-bound translation factors. The protein is Large ribosomal subunit protein uL11 of Streptococcus suis (strain 98HAH33).